A 364-amino-acid chain; its full sequence is Glycine oxidase (364 aa).

FAD is bound by residues 12–13 (VI), 32–33 (ER), 40–41 (AS), 45–47 (GGI), and valine 173. Arginine 302 is a substrate binding site. Position 327-333 (327-333 (HYRNGLV)) interacts with FAD.

It belongs to the DAO family. ThiO subfamily. As to quaternary structure, monomer. FAD is required as a cofactor.

It catalyses the reaction glycine + O2 + H2O = glyoxylate + H2O2 + NH4(+). The catalysed reaction is sarcosine + O2 + H2O = methylamine + glyoxylate + H2O2. It participates in cofactor biosynthesis; thiamine diphosphate biosynthesis. Functionally, catalyzes the oxidation of glycine, leading to glyoxyl imine and hydrogen peroxide as primary products; glyoxyl imine is used for the biosynthesis of the thiazole ring of thiamine. Otherwise, glyoxyl imine is spontaneously hydrolyzed in water to produce glyoxylate and ammonia. Can also use sarcosine (N-methylglycine) as substrate. The sequence is that of Glycine oxidase from Pseudomonas aeruginosa (strain ATCC 15692 / DSM 22644 / CIP 104116 / JCM 14847 / LMG 12228 / 1C / PRS 101 / PAO1).